Reading from the N-terminus, the 699-residue chain is MEVHELFRYFRMPELIDIRQYVRTLPTNTLMGFGAFAALTTFWYATRPKALKPPCDLSMQSVEVTGTTEGVRRSAVLEDDKLLLYYYDDVRTMYDGFQRGIQVSNDGPCLGSRKPNQPYEWISYKQVAEMAECIGSALIQKGFKPCSEQFIGIFSQNRPEWVTIEQGCFTYSMVVVPLYDTLGTDAITYIVNKAELSVIFADKPEKAKLLLEGVENKLTPCLKIIVIMDSYDNDLVERGQKCGVEIIGLKALEDLGRVNRTKPKPPEPEDLAIICFTSGTTGNPKGAMVTHQNIMNDCSGFIKATESAFIASPEDVLISFLPLAHMFETVVECVMLCHGAKIGFFQGDIRLLMDDLKVLQPTIFPVVPRLLNRMFDRIFGQANTSVKRWLLDFASKRKEAELRSGIVRNNSLWDKLIFHKIQSSLGGKVRLMITGAAPVSATVLTFLRAALGCQFYEGYGQTECTAGCCLSLPGDWTAGHVGAPMPCNYIKLVDVEDMNYQAAKGEGEVCVKGANVFKGYLKDPARTAEALDKDGWLHTGDIGKWLPNGTLKIIDRKKHIFKLAQGEYIAPEKIENIYLRSEAVAQVFVHGESLQAFLIAIVVPDVEILPSWAQKRGFQGSFEELCRNKDINKAILEDMVKLGKNAGLKPFEQVKGIAVHPELFSIDNGLLTPTLKAKRPELRNYFRSQIDELYSTIKI.

Met-1 is modified (N-acetylmethionine). Position 9 is a 3'-nitrotyrosine (Tyr-9). A helical; Signal-anchor for type III membrane protein transmembrane segment spans residues 25–45 (LPTNTLMGFGAFAALTTFWYA). Residues 46–699 (TRPKALKPPC…IDELYSTIKI (654 aa)) are Cytoplasmic-facing. Tyr-85 is modified (phosphotyrosine). The residue at position 86 (Tyr-86) is a 3'-nitrotyrosine. The O-linked (GlcNAc) serine glycan is linked to Ser-136. 3 positions are modified to N6-acetyllysine: Lys-208, Lys-357, and Lys-387. At Ser-621 the chain carries Phosphoserine. Lys-633 bears the N6-acetyllysine mark.

The protein belongs to the ATP-dependent AMP-binding enzyme family. Requires Mg(2+) as cofactor. As to expression, liver, heart, epididymal adipose and to a lesser extent brain, small intestine and lung.

It localises to the mitochondrion outer membrane. Its subcellular location is the peroxisome membrane. The protein resides in the microsome membrane. The protein localises to the endoplasmic reticulum membrane. The catalysed reaction is a long-chain fatty acid + ATP + CoA = a long-chain fatty acyl-CoA + AMP + diphosphate. The enzyme catalyses (5Z,8Z,11Z,14Z)-eicosatetraenoate + ATP + CoA = (5Z,8Z,11Z,14Z)-eicosatetraenoyl-CoA + AMP + diphosphate. It catalyses the reaction 3,7,11,15-tetramethylhexadecanoate + ATP + CoA = phytanoyl-CoA + AMP + diphosphate. It carries out the reaction hexadecanoate + ATP + CoA = hexadecanoyl-CoA + AMP + diphosphate. The catalysed reaction is (E)-hexadec-2-enoate + ATP + CoA = (2E)-hexadecenoyl-CoA + AMP + diphosphate. The enzyme catalyses 2,6,10,14-tetramethylpentadecanoate + ATP + CoA = pristanoyl-CoA + AMP + diphosphate. It catalyses the reaction 14,15-epoxy-(5Z,8Z,11Z)-eicosatrienoate + ATP + CoA = 14,15-epoxy-(5Z,8Z,11Z)-eicosatrienoyl-CoA + AMP + diphosphate. It carries out the reaction 5-hydroxy-(6E,8Z,11Z,14Z)-eicosatetraenoate + ATP + CoA = 5-hydroxy-(6E,8Z,11Z,14Z)-eicosatetraenoyl-CoA + AMP + diphosphate. The catalysed reaction is 12-hydroxy-(5Z,8Z,10E,14Z)-eicosatetraenoate + ATP + CoA = 12-hydroxy-(5Z,8Z,10E,14Z)-eicosatetraenoyl-CoA + AMP + diphosphate. The enzyme catalyses 15-hydroxy-(5Z,8Z,11Z,13E)-eicosatetraenoate + ATP + CoA = 15-hydroxy-(5Z,8Z,11Z,13E)-eicosatetraenoyl-CoA + AMP + diphosphate. It catalyses the reaction (9Z)-octadecenoate + ATP + CoA = (9Z)-octadecenoyl-CoA + AMP + diphosphate. Inhibited at high temperature and by arachidonate. Catalyzes the conversion of long-chain fatty acids to their active form acyl-CoAs for both synthesis of cellular lipids, and degradation via beta-oxidation. Preferentially uses palmitoleate, oleate and linoleate. Preferentially activates arachidonate than epoxyeicosatrienoic acids (EETs) or hydroxyeicosatrienoic acids (HETEs). This chain is Long-chain-fatty-acid--CoA ligase 1, found in Rattus norvegicus (Rat).